The primary structure comprises 403 residues: RILP-like protein 1 (403 aa).

Position 7 is a phosphoserine (Ser7). The RH1 domain occupies 10 to 97 (AAESALEKNV…RLERMDRIEK (88 aa)). Cys47 carries the S-nitrosocysteine modification. Residues 76-258 (ELDELRLELD…KLRERLQGEH (183 aa)) adopt a coiled-coil conformation. Disordered stretches follow at residues 254-275 (LQGEHSQNGEEEPETEPVGEES), 327-352 (EMEEENRIPQPPPIAHPRTSPQPESG), and 384-403 (ANTHRDDGYTEQGQEALQHL). Ser259 is subject to Phosphoserine. Positions 262–275 (GEEEPETEPVGEES) are enriched in acidic residues. The RH2 domain maps to 291–356 (RPRFTLQELR…PQPESGIKRL (66 aa)). Polar residues predominate over residues 394-403 (EQGQEALQHL).

It belongs to the RILPL family. In terms of assembly, interacts (when S-nitrosylated) with GAPDH. Interacts with RAB8A; interaction is dependent on the phosphorylation of 'Thr-72' of RAB8A. Interacts with RAB10 and RAB12; the interaction is dependent on the phosphorylation of 'Thr-73' of RAB10, and 'Ser-105' of RAB12. Post-translationally, S-nitrosylation is required for the interaction with GAPDH. As to expression, widely expressed. Expressed at lower level in liver and kidney.

The protein localises to the cytoplasm. The protein resides in the cytosol. It is found in the cytoskeleton. It localises to the microtubule organizing center. Its subcellular location is the centrosome. The protein localises to the centriole. The protein resides in the cilium basal body. Plays a role in the regulation of cell shape and polarity. Plays a role in cellular protein transport, including protein transport away from primary cilia. Neuroprotective protein, which acts by sequestring GAPDH in the cytosol and prevent the apoptotic function of GAPDH in the nucleus. Competes with SIAH1 for binding GAPDH. Does not regulate lysosomal morphology and distribution. Binds to RAB10 following LRRK2-mediated RAB10 phosphorylation which leads to inhibition of ciliogenesis. In Homo sapiens (Human), this protein is RILP-like protein 1 (RILPL1).